Reading from the N-terminus, the 472-residue chain is Meiotic spindle formation protein mei-1 (472 aa).

The segment at 83–161 (HEAMTRQSGS…TQGILPQNSA (79 aa)) is disordered. A Phosphoserine; by mbk-2 modification is found at S92. Composition is skewed to polar residues over residues 134-143 (KSTSSMSTNP) and 150-161 (NPTQGILPQNSA). ATP contacts are provided by residues 233-240 (GPPGTGKT) and 351-352 (RR).

This sequence belongs to the AAA ATPase family. Katanin p60 subunit A1 subfamily. As to quaternary structure, homohexamer; ATP hydrolysis initiates a cycle between an open spiral and a closed ring conformation which is probably involved in pulling tubulin dimers out from microtubules. Interacts with mei-2, which may serve as a targeting subunit. Interacts with mel-26, which targets mei-1 for ubiquitin mediated proteolysis. Interacts with phosphatase pph-4.1. In terms of processing, phosphorylated. Phosphorylation by mbk-2 is required for its rapid degradation following meiosis II. Likely dephosphorylated by the PP4 complex composed of catalytic subunit pph-4.1 and regulatory subunit ppfr-1. Post-translationally, polyubiquitination targets the protein for rapid degradation via the ubiquitin system at the end of meiosis. The BTB domain protein mel-26 may serve to specifically target mei-1 for ubiquitination by cul-3 containing complexes. The cul-3 protein is in turn regulated by neddylation by ned-8.

The protein resides in the cytoplasm. It localises to the cytoskeleton. Its subcellular location is the spindle pole. The protein localises to the chromosome. It carries out the reaction n ATP + n H2O + a microtubule = n ADP + n phosphate + (n+1) alpha/beta tubulin heterodimers.. With respect to regulation, ATPase activity is stimulated by microtubules, which promote homooligomerization. ATP-dependent microtubule severing is stimulated by interaction with mei-2. In terms of biological role, catalytic subunit of a complex which severs microtubules in an ATP-dependent manner. Microtubule severing may promote rapid reorganization of cellular microtubule arrays. Required specifically for meiotic spindle formation in the female germline; the presence of this protein is inimical to the formation of mitotic spindles. In body wall muscles, regulates organization of myosin thick filaments. The chain is Meiotic spindle formation protein mei-1 from Caenorhabditis elegans.